Here is a 201-residue protein sequence, read N- to C-terminus: Dephospho-CoA kinase (201 aa).

In terms of domain architecture, DPCK spans 4 to 201; it reads SVGLTGNIAS…KYLREAKIKQ (198 aa). Residue 12 to 17 participates in ATP binding; sequence ASGKST.

Belongs to the CoaE family.

The protein resides in the cytoplasm. The catalysed reaction is 3'-dephospho-CoA + ATP = ADP + CoA + H(+). It participates in cofactor biosynthesis; coenzyme A biosynthesis; CoA from (R)-pantothenate: step 5/5. In terms of biological role, catalyzes the phosphorylation of the 3'-hydroxyl group of dephosphocoenzyme A to form coenzyme A. This chain is Dephospho-CoA kinase, found in Legionella pneumophila subsp. pneumophila (strain Philadelphia 1 / ATCC 33152 / DSM 7513).